Here is a 417-residue protein sequence, read N- to C-terminus: uncharacterized protein (417 aa).

The next 10 helical transmembrane spans lie at 21-41, 50-70, 88-108, 166-186, 217-237, 255-275, 283-303, 308-328, 351-371, and 373-393; these read ISSL…AFQL, LLMM…GLLA, LTVI…LLSV, SVFY…FFLP, MPLL…LQIG, LAGW…AITG, LLYF…APFL, IAGI…FGLV, AIQS…GVLA, and WIGV…IGLI.

Belongs to the major facilitator superfamily. TCR/Tet family.

It is found in the cell membrane. This is an uncharacterized protein from Bacillus subtilis (strain 168).